The chain runs to 576 residues: Lysine--tRNA ligase, mitochondrial (576 aa).

A mitochondrion-targeting transit peptide spans 1–30; it reads MNVLLKRRSLTFAPRWLWCKCRSSRSRPYS.

This sequence belongs to the class-II aminoacyl-tRNA synthetase family.

It is found in the mitochondrion matrix. The catalysed reaction is tRNA(Lys) + L-lysine + ATP = L-lysyl-tRNA(Lys) + AMP + diphosphate. Functionally, catalyzes the attachment of lysine to tRNA(Lys) in the mitochondrion. The polypeptide is Lysine--tRNA ligase, mitochondrial (MSK1) (Saccharomyces cerevisiae (strain ATCC 204508 / S288c) (Baker's yeast)).